The sequence spans 189 residues: Interferon alpha-1 (189 aa).

The signal sequence occupies residues 1-23 (MAPAWSLLLALLLLSCNAICSLG). 2 disulfide bridges follow: C24/C122 and C52/C162.

This sequence belongs to the alpha/beta interferon family. As to quaternary structure, interacts with CR2.

The protein resides in the secreted. Functionally, produced by macrophages, IFN-alpha have antiviral activities. Interferon stimulates the production of two enzymes: a protein kinase and an oligoadenylate synthetase. The protein is Interferon alpha-1 of Bos taurus (Bovine).